Reading from the N-terminus, the 448-residue chain is Phosphoglucosamine mutase (448 aa).

Serine 100 (phosphoserine intermediate) is an active-site residue. The Mg(2+) site is built by serine 100, aspartate 240, aspartate 242, and aspartate 244. Serine 100 carries the phosphoserine modification.

It belongs to the phosphohexose mutase family. Mg(2+) serves as cofactor. In terms of processing, activated by phosphorylation.

It carries out the reaction alpha-D-glucosamine 1-phosphate = D-glucosamine 6-phosphate. Catalyzes the conversion of glucosamine-6-phosphate to glucosamine-1-phosphate. In Geobacillus thermodenitrificans (strain NG80-2), this protein is Phosphoglucosamine mutase.